Here is an 893-residue protein sequence, read N- to C-terminus: NEDD4-binding protein 1 (893 aa).

The KH-like domain occupies 59 to 143 (QEAVHSAKEY…IQQFVKLFES (85 aa)). Residues 213-243 (EYTQSAATGPSSARDEVVVQEDSRNKARTPV) form a disordered region. Polar residues predominate over residues 214-223 (YTQSAATGPS). The segment covering 225–237 (ARDEVVVQEDSRN) has biased composition (basic and acidic residues). Residue Thr241 is modified to Phosphothreonine. Phosphoserine is present on residues Ser257, Ser269, and Ser299. 3 disordered regions span residues 273–339 (DALS…DGKD), 394–433 (RDFPPCTVYPDASQSRNAGVGSTTNELTADSTPKKAQSHT), and 472–564 (IWGS…PPLP). Composition is skewed to polar residues over residues 405 to 433 (ASQSRNAGVGSTTNELTADSTPKKAQSHT) and 523 to 537 (GFQQQTEPLLPNNTK). Residues 551–564 (QPKPNYPPLSPPLP) are compositionally biased toward pro residues. Residue Ser560 is modified to Phosphoserine. In terms of domain architecture, RNase NYN spans 615 to 767 (LKHIVIDGSN…LGRNGPRLEE (153 aa)). Residues 793–820 (PGFRSPSTQVANNSHQPPPRIQTSSSPW) form a disordered region. A compositionally biased stretch (polar residues) spans 797–820 (SPSTQVANNSHQPPPRIQTSSSPW). The tract at residues 846–893 (RSSAETSELREALLKIFPDSEQKLKIDQILAAHPYMKDLNALSALVLD) is coCUN.

It belongs to the N4BP1 family. Interacts with NEDD4. Interacts with ITCH (via WW domain 2). In terms of processing, proteolytically cleaved by CASP8 downstream of TLR3 or TLR4, leading to its inactivation. Mainly cleaved at Asp-488 by CASP8. Cleaved by caspase-like protein MALT1, leading to its inactivation. Mono- and polyubiquitinated on the CoCUN region. Monoubiquitinated by NEDD4. Polyubiquitinated, leading to its degradation by the proteasome. Sumoylated with SUMO1, abrogating polyubiquitination and subsequent degradation. Desumoylated by SENP1, leading to accumulation in PML nuclear bodies.

The protein localises to the cytoplasm. It is found in the cytosol. It localises to the nucleus. Its subcellular location is the nucleolus. The protein resides in the PML body. With respect to regulation, proteolytic cleavage by CASP8 or MALT1 leads to its inactivation. Functionally, potent suppressor of cytokine production that acts as a regulator of innate immune signaling and inflammation. Acts as a key negative regulator of select cytokine and chemokine responses elicited by TRIF-independent Toll-like receptors (TLRs), thereby limiting inflammatory cytokine responses to minor insults. In response to more threatening pathogens, cleaved by CASP8 downstream of TLR3 or TLR4, leading to its inactivation, thereby allowing production of inflammatory cytokines. Acts as a restriction factor against some viruses: restricts viral replication by binding to mRNA viruses and mediating their degradation via its ribonuclease activity. Also acts as an inhibitor of the E3 ubiquitin-protein ligase ITCH: acts by interacting with the second WW domain of ITCH, leading to compete with ITCH's substrates and impairing ubiquitination of substrates. In Mus musculus (Mouse), this protein is NEDD4-binding protein 1.